Here is a 691-residue protein sequence, read N- to C-terminus: Guanylate cyclase soluble subunit alpha-1 (691 aa).

Serine 267 carries the phosphoserine modification. One can recognise a Guanylate cyclase domain in the interval 480–607; the sequence is VTMLFSDIVG…GNNVTLANKF (128 aa).

It belongs to the adenylyl cyclase class-4/guanylyl cyclase family. As to quaternary structure, the active enzyme is formed by a heterodimer of an alpha and a beta subunit. Heterodimer with GUCY1B1. It depends on Mg(2+) as a cofactor. Mn(2+) serves as cofactor.

Its subcellular location is the cytoplasm. It carries out the reaction GTP = 3',5'-cyclic GMP + diphosphate. Its activity is regulated as follows. Activated by nitric oxide in the presence of magnesium or manganese ions. The polypeptide is Guanylate cyclase soluble subunit alpha-1 (Gucy1a1) (Mus musculus (Mouse)).